Reading from the N-terminus, the 369-residue chain is tRNA-specific 2-thiouridylase MnmA (369 aa).

Residues 12–19 and Met38 contribute to the ATP site; that span reads GMSGGVDS. Residues 98 to 100 are interaction with target base in tRNA; sequence NPD. Cys103 (nucleophile) is an active-site residue. A disulfide bridge connects residues Cys103 and Cys200. Position 128 (Gly128) interacts with ATP. The interval 150 to 152 is interaction with tRNA; the sequence is KDQ. Cys200 (cysteine persulfide intermediate) is an active-site residue. The tract at residues 312–313 is interaction with tRNA; sequence RY.

This sequence belongs to the MnmA/TRMU family.

The protein resides in the cytoplasm. It carries out the reaction S-sulfanyl-L-cysteinyl-[protein] + uridine(34) in tRNA + AH2 + ATP = 2-thiouridine(34) in tRNA + L-cysteinyl-[protein] + A + AMP + diphosphate + H(+). Functionally, catalyzes the 2-thiolation of uridine at the wobble position (U34) of tRNA, leading to the formation of s(2)U34. This Tolumonas auensis (strain DSM 9187 / NBRC 110442 / TA 4) protein is tRNA-specific 2-thiouridylase MnmA.